The sequence spans 375 residues: MFNIIKNDKNSNARLGILELPHGNVATPCFMPVGTLGVMKALKHDVLEKLGCDLMLANTYHLYLRPGIDVIKKYGNLHNFTTWNKNFLTDSGGFQVFSLSNFRKIEDEGVDFKSHIDGSRHYFTPESVFSMQETFESDIIMALDICSPYGIDYDEASLYTNITTSWARRTLCAYKNRKEGYEGLLFLITQGNFFKDLRKRSTELILELNSPGIAIGGISVGEPRDRYLEILEYNSSLIPKDKPKYVMGIGTPHYILDAIYNGIDIFDCVNPTRIARHGSLLTDNGILRINRAEFCFDTCSVERECSCTLCTRYSRGYLRHLFKSEEALGVMLASEHNIHYMFRLINKTKNAIMNDNFVKFRKLYLDKYDEGNLNE.

Asp90 serves as the catalytic Proton acceptor. Residues 90–94 (DSGGF), Asp144, Gln190, and Gly217 contribute to the substrate site. The RNA binding stretch occupies residues 248–254 (GIGTPHY). Residue Asp267 is the Nucleophile of the active site. The RNA binding; important for wobble base 34 recognition stretch occupies residues 272–276 (TRIAR). Cys305, Cys307, Cys310, and His336 together coordinate Zn(2+).

This sequence belongs to the queuine tRNA-ribosyltransferase family. In terms of assembly, homodimer. Within each dimer, one monomer is responsible for RNA recognition and catalysis, while the other monomer binds to the replacement base PreQ1. Zn(2+) is required as a cofactor.

It carries out the reaction 7-aminomethyl-7-carbaguanine + guanosine(34) in tRNA = 7-aminomethyl-7-carbaguanosine(34) in tRNA + guanine. The protein operates within tRNA modification; tRNA-queuosine biosynthesis. Catalyzes the base-exchange of a guanine (G) residue with the queuine precursor 7-aminomethyl-7-deazaguanine (PreQ1) at position 34 (anticodon wobble position) in tRNAs with GU(N) anticodons (tRNA-Asp, -Asn, -His and -Tyr). Catalysis occurs through a double-displacement mechanism. The nucleophile active site attacks the C1' of nucleotide 34 to detach the guanine base from the RNA, forming a covalent enzyme-RNA intermediate. The proton acceptor active site deprotonates the incoming PreQ1, allowing a nucleophilic attack on the C1' of the ribose to form the product. After dissociation, two additional enzymatic reactions on the tRNA convert PreQ1 to queuine (Q), resulting in the hypermodified nucleoside queuosine (7-(((4,5-cis-dihydroxy-2-cyclopenten-1-yl)amino)methyl)-7-deazaguanosine). This chain is Queuine tRNA-ribosyltransferase, found in Borrelia recurrentis (strain A1).